The primary structure comprises 186 residues: MLLYVCLVNLLLQSPSGVDSQVALGVIAKVGVNVAMKLISNIWKGDVVRGWKCAVENKSTKTLYALGTTPVSGHLATVLPDIPPQSTGMFVWSKSRGAARGAIGVVHYQYGNKVLNIMASIPYDWNLYGAWANARVTYQREPFSNLYYGRKGTKYPTRDGNWGKVDGTKFFLTEKSHAKFKVIFSG.

The N-terminal stretch at methionine 1–serine 20 is a signal peptide. Positions arginine 158–glycine 160 match the Cell attachment site motif.

The protein belongs to the actinoporin family. HALT subfamily. In terms of assembly, octamer or nonamer in membranes. Monomer in the soluble state. In vitro, interacts with folate receptor alpha (of target organism).

The protein localises to the nematocyst. Its subcellular location is the secreted. It localises to the target cell membrane. In terms of biological role, pore-forming protein that forms hydrophilic pores and causes cytolysis. Compared to equinatoxin-2 (AC P61914), it reveals lower cytolysis activity (5-12-fold difference, tested on erythrocytes), a larger pore size (probably 2-3 nm) and different affinity to membrane lipids (100-fold lower affinity to sphingomyelin). Binds to sulfatides (SFT) as well as to the two sphingolipids, lysophosphatidic acid (LPA) and sphingosine-1-phosphate (S1P). It seems to bind more strongly to LPA than to S1P and SFT. Shows cytolytic activity on HeLa cells, with a different potency than its paralogs (from most potent to less potent: HALT-4&gt;HALT-6~HALT-1&gt;HALT-3&gt;HALT-7&gt;HALT-2). Pore formation is a multi-step process that involves specific recognition of membrane lipid by a protein aromatic residues rich region, firm binding to the membrane (mainly driven by hydrophobic interactions) accompanied by the transfer of the N-terminal region to the lipid-water interface and finally pore formation after oligomerization of monomers. In vitro, binds to the folate receptor alpha (FOLR1), a GPI-anchored membrane protein that plays a major role in the uptake of folate/folic acid into cells via endocytosis, suggesting a possible involvement of this receptor in the mechanism of HALT-1-induced cell lysis. In vivo, does not cause visible paralysis in larvae of the blowfly Sarcophaga faculata, the most common arthropod prey of Hydra. In Hydra vulgaris (Hydra), this protein is Hydra actinoporin-like toxin 5.